We begin with the raw amino-acid sequence, 134 residues long: Citrolysin protein 2 (134 aa).

The sequence is that of Citrolysin protein 2 from Citrobacter freundii.